The following is a 123-amino-acid chain: UPF0102 protein APJL_1381 (123 aa).

This sequence belongs to the UPF0102 family.

The protein is UPF0102 protein APJL_1381 of Actinobacillus pleuropneumoniae serotype 3 (strain JL03).